A 523-amino-acid polypeptide reads, in one-letter code: NADH-ubiquinone oxidoreductase chain 4 (523 aa).

14 consecutive transmembrane segments (helical) span residues F22–L42, L62–F82, I120–W140, E149–D169, L170–V190, F204–F224, I246–I266, P276–L296, F303–V323, I338–N358, I366–L386, T404–G424, F444–C464, and F488–F508.

The protein belongs to the complex I subunit 4 family.

Its subcellular location is the mitochondrion membrane. It catalyses the reaction a ubiquinone + NADH + 5 H(+)(in) = a ubiquinol + NAD(+) + 4 H(+)(out). Core subunit of the mitochondrial membrane respiratory chain NADH dehydrogenase (Complex I) that is believed to belong to the minimal assembly required for catalysis. Complex I functions in the transfer of electrons from NADH to the respiratory chain. The immediate electron acceptor for the enzyme is believed to be ubiquinone. This Prototheca wickerhamii protein is NADH-ubiquinone oxidoreductase chain 4 (ND4).